A 27-amino-acid chain; its full sequence is GFMDLIKKAGGWLKKKGPALIKAALQE.

Belongs to the ponericin-G family. As to expression, expressed by the venom gland.

The protein localises to the secreted. In terms of biological role, shows a broad spectrum of activity against both Gram-positive and Gram-negative bacteria. Also has antimicrobial activity against S.cerevisiae. Has insecticidal and non-hemolytic activity. This Neoponera apicalis (Ant) protein is U1-poneritoxin-Na3b.